The chain runs to 507 residues: ATP synthase subunit alpha, chloroplastic (507 aa).

ATP is bound at residue 170-177 (GDRQTGKT). Position 257 is a phosphothreonine (Thr-257).

The protein belongs to the ATPase alpha/beta chains family. In terms of assembly, F-type ATPases have 2 components, CF(1) - the catalytic core - and CF(0) - the membrane proton channel. CF(1) has five subunits: alpha(3), beta(3), gamma(1), delta(1), epsilon(1). CF(0) has four main subunits: a, b, b' and c.

The protein resides in the plastid. It is found in the chloroplast thylakoid membrane. The catalysed reaction is ATP + H2O + 4 H(+)(in) = ADP + phosphate + 5 H(+)(out). Produces ATP from ADP in the presence of a proton gradient across the membrane. The alpha chain is a regulatory subunit. This chain is ATP synthase subunit alpha, chloroplastic, found in Aethionema grandiflorum (Persian stone-cress).